Here is a 469-residue protein sequence, read N- to C-terminus: Uronate isomerase (469 aa).

The protein belongs to the metallo-dependent hydrolases superfamily. Uronate isomerase family.

It catalyses the reaction D-glucuronate = D-fructuronate. The enzyme catalyses aldehydo-D-galacturonate = keto-D-tagaturonate. It functions in the pathway carbohydrate metabolism; pentose and glucuronate interconversion. This is Uronate isomerase from Pectobacterium carotovorum subsp. carotovorum (strain PC1).